A 186-amino-acid polypeptide reads, in one-letter code: Ribosome-recycling factor (186 aa).

It belongs to the RRF family.

It localises to the cytoplasm. Functionally, responsible for the release of ribosomes from messenger RNA at the termination of protein biosynthesis. May increase the efficiency of translation by recycling ribosomes from one round of translation to another. This Endomicrobium trichonymphae protein is Ribosome-recycling factor.